Consider the following 404-residue polypeptide: Cysteine desulfurase IscS (404 aa).

Pyridoxal 5'-phosphate-binding positions include 75–76, Asn155, Gln183, and 203–205; these read AT and SGH. An N6-(pyridoxal phosphate)lysine modification is found at Lys206. Thr243 is a binding site for pyridoxal 5'-phosphate. Cys328 (cysteine persulfide intermediate) is an active-site residue. A [2Fe-2S] cluster-binding site is contributed by Cys328.

The protein belongs to the class-V pyridoxal-phosphate-dependent aminotransferase family. NifS/IscS subfamily. As to quaternary structure, homodimer. Forms a heterotetramer with IscU, interacts with other sulfur acceptors. Pyridoxal 5'-phosphate is required as a cofactor.

It localises to the cytoplasm. The catalysed reaction is (sulfur carrier)-H + L-cysteine = (sulfur carrier)-SH + L-alanine. The protein operates within cofactor biosynthesis; iron-sulfur cluster biosynthesis. Its function is as follows. Master enzyme that delivers sulfur to a number of partners involved in Fe-S cluster assembly, tRNA modification or cofactor biosynthesis. Catalyzes the removal of elemental sulfur atoms from cysteine to produce alanine. Functions as a sulfur delivery protein for Fe-S cluster synthesis onto IscU, an Fe-S scaffold assembly protein, as well as other S acceptor proteins. The polypeptide is Cysteine desulfurase IscS (Shewanella sp. (strain ANA-3)).